Reading from the N-terminus, the 267-residue chain is Undecaprenyl-diphosphatase (267 aa).

8 helical membrane-spanning segments follow: residues 1-21, 40-60, 83-103, 111-131, 144-164, 189-209, 219-239, and 245-265; these read MTLF…FLPV, GLAI…LYFW, AFLA…GLII, MMRS…VLYW, GWTL…LIPG, AMLM…ADVI, DGAL…ALMM, and VSFT…LVYA.

It belongs to the UppP family.

Its subcellular location is the cell inner membrane. It catalyses the reaction di-trans,octa-cis-undecaprenyl diphosphate + H2O = di-trans,octa-cis-undecaprenyl phosphate + phosphate + H(+). Functionally, catalyzes the dephosphorylation of undecaprenyl diphosphate (UPP). Confers resistance to bacitracin. In Roseobacter denitrificans (strain ATCC 33942 / OCh 114) (Erythrobacter sp. (strain OCh 114)), this protein is Undecaprenyl-diphosphatase.